Consider the following 313-residue polypeptide: Ribosomal RNA small subunit methyltransferase H (313 aa).

S-adenosyl-L-methionine contacts are provided by residues 36-38 (GGH), D56, F80, D102, and Q109.

It belongs to the methyltransferase superfamily. RsmH family.

It is found in the cytoplasm. The catalysed reaction is cytidine(1402) in 16S rRNA + S-adenosyl-L-methionine = N(4)-methylcytidine(1402) in 16S rRNA + S-adenosyl-L-homocysteine + H(+). In terms of biological role, specifically methylates the N4 position of cytidine in position 1402 (C1402) of 16S rRNA. The protein is Ribosomal RNA small subunit methyltransferase H of Actinobacillus pleuropneumoniae serotype 7 (strain AP76).